A 356-amino-acid chain; its full sequence is RuBisCO accumulation factor 1 (356 aa).

The interval 9 to 192 (LSEEERQELL…RALIEALLLD (184 aa)) is N-terminal alpha-helix. The tract at residues 216 to 342 (PRLLPFAGTL…LVLILRPKRV (127 aa)) is C-terminal beta-sheet.

Belongs to the RAF family. As to quaternary structure, homodimer. Forms an RbcL(8)-Raf1(8) complex. Forms complexes of many stoichiometries with RbcL with and without RbcS. RbcX and Raf1 can bind simultaneously to RbcL.

It localises to the cytoplasm. A major RuBisCO chaperone. Acts after GroEL-GroES chaperonin to fold and/or assemble the large subunit of RuBisCO (ccbL, rbcL). Cooperates with RbcX in RbcL folding, plays the major role in assembly of dimers into RbcL(8)-Raf1(8) intermediate complexes. RbcS replaces Raf1, leading to holoenzyme formation. In terms of biological role, the Raf1 dimer brackets an RbcL dimer, leading to RbcL(8)-Raf1(8) complex formation. RbcS displaces Raf1, resulting in holoenzyme formation. Probably plays a role in early carboxysome assembly; in its absence CcaA, CcmM, CcmN, RbcL and RbcS colocalize in small patches while the shell proteins CcmK2, CcmK3 and CcmK4 are found diffused in the cytoplasm. Its function is as follows. It has been suggested that Raf1 and RbcX are partially functionally redundant. Other evidence suggests they are antagonistic in mediating RuBisCO assembly. The protein is RuBisCO accumulation factor 1 of Synechococcus elongatus (strain ATCC 33912 / PCC 7942 / FACHB-805) (Anacystis nidulans R2).